The following is a 445-amino-acid chain: MAESPIVNHPEQGLCRDCLSLQKTQTSRRCHACGSPRLIRHKELYRLSLAHVDCDAFYASVEKRDNPDLRDKPLIVGGGKRGVVSTACYLARIHGVRSAMPMFKALEACPDAVVIKPNMEKYARVGREVRQMMRDLTPLVEPISIDEAFLDLSGTERLHKAPPAVVLARFSKRVENEIGITASIGLSYCKYLAKVASDLEKPRGFSVIGEAEALDFLRDKPVGMIWGVGKAFAAKLESDGIRTIGQLQTMEEGALMKAYGTMGQRLYRLSRGQDSRKVEPDHDMKSVSAETTFNTDLSAAGDLVPVLRALSEKVSRRLKAGEIAGRTIVLKLKTQDFKLRTRNRQLGDPTQLADRIFRTGLQLLEKEMDGTRFRLLGIGVSDLSPSDRADPPDLVDIQATKRAVAESAIDRLRNKFGLNAVETGYTFSKGNLARTQTPTDRDNEP.

Residues 49 to 229 (LAHVDCDAFY…KPVGMIWGVG (181 aa)) enclose the UmuC domain. Mg(2+) contacts are provided by aspartate 53 and aspartate 146. Glutamate 147 is a catalytic residue.

It belongs to the DNA polymerase type-Y family. In terms of assembly, monomer. The cofactor is Mg(2+).

Its subcellular location is the cytoplasm. It carries out the reaction DNA(n) + a 2'-deoxyribonucleoside 5'-triphosphate = DNA(n+1) + diphosphate. Poorly processive, error-prone DNA polymerase involved in untargeted mutagenesis. Copies undamaged DNA at stalled replication forks, which arise in vivo from mismatched or misaligned primer ends. These misaligned primers can be extended by PolIV. Exhibits no 3'-5' exonuclease (proofreading) activity. May be involved in translesional synthesis, in conjunction with the beta clamp from PolIII. The polypeptide is DNA polymerase IV (Brucella melitensis biotype 1 (strain ATCC 23456 / CCUG 17765 / NCTC 10094 / 16M)).